The chain runs to 99 residues: Large ribosomal subunit protein uL23 (99 aa).

The protein belongs to the universal ribosomal protein uL23 family. Part of the 50S ribosomal subunit. Contacts protein L29, and trigger factor when it is bound to the ribosome.

Functionally, one of the early assembly proteins it binds 23S rRNA. One of the proteins that surrounds the polypeptide exit tunnel on the outside of the ribosome. Forms the main docking site for trigger factor binding to the ribosome. In Rhodopseudomonas palustris (strain HaA2), this protein is Large ribosomal subunit protein uL23.